The following is a 594-amino-acid chain: Protein FAM200C (594 aa).

The polypeptide is Protein FAM200C (FAM200C) (Bos taurus (Bovine)).